The chain runs to 305 residues: tRNA dimethylallyltransferase (305 aa).

8–15 (GPTASGKT) is an ATP binding site. A substrate-binding site is contributed by 10–15 (TASGKT). An interaction with substrate tRNA region spans residues 33-36 (DSQQ).

It belongs to the IPP transferase family. In terms of assembly, monomer. Mg(2+) serves as cofactor.

The enzyme catalyses adenosine(37) in tRNA + dimethylallyl diphosphate = N(6)-dimethylallyladenosine(37) in tRNA + diphosphate. In terms of biological role, catalyzes the transfer of a dimethylallyl group onto the adenine at position 37 in tRNAs that read codons beginning with uridine, leading to the formation of N6-(dimethylallyl)adenosine (i(6)A). This is tRNA dimethylallyltransferase from Anaeromyxobacter dehalogenans (strain 2CP-1 / ATCC BAA-258).